A 158-amino-acid chain; its full sequence is Transcription factor bHLH146 (158 aa).

Low complexity predominate over residues 77-90; it reads SSSSNPTTTTSSSS. The disordered stretch occupies residues 77–110; that stretch reads SSSSNPTTTTSSSSDGIRILERPDKEGGNEEGGI. Residues 94 to 110 are compositionally biased toward basic and acidic residues; it reads RILERPDKEGGNEEGGI. Positions 94–143 constitute a bHLH; atypical domain; it reads RILERPDKEGGNEEGGIEERLRELKKLLPGGEEMNVEEMLSEIGNYIKCL.

It belongs to the bHLH protein family.

The protein resides in the nucleus. The sequence is that of Transcription factor bHLH146 (BHLH146) from Arabidopsis thaliana (Mouse-ear cress).